A 310-amino-acid polypeptide reads, in one-letter code: MQGDVYDKDKQTVCPECGSTELIGDYERAEVVCAHCGLVIDENLVDMGPEWRAFDHEQRDKRTRVGAPITYTIHDKGLSTMIDWRNKDIYGRDIPARNRAQWYRLRKWQRKIRISGATERNLAFALSELDRDSSRLGLPRSVREAASVVYRSAVDNKLIRGRSIEGVVAASLYAACRRCNVPRTLDEIAEVSRVTKKEVGRTYRFLTRELNIKLPPTSPVDYVPRFASELGLSGEAQSRAIEIIEKAMEKGLTSGRGPTGVAAAALYIASVLLGERKTQRDVADIAGVTEVTIRNRYKELTEQLEMGVTL.

Residues 9–41 (DKQTVCPECGSTELIGDYERAEVVCAHCGLVID) form a TFIIB-type zinc finger. Zn(2+) is bound by residues cysteine 14, cysteine 17, cysteine 33, and cysteine 36. A run of 2 repeats spans residues 127–210 (SELD…TREL) and 221–302 (DYVP…ELTE).

The protein belongs to the TFIIB family.

Its function is as follows. Stabilizes TBP binding to an archaeal box-A promoter. Also responsible for recruiting RNA polymerase II to the pre-initiation complex (DNA-TBP-TFIIB). The sequence is that of Transcription initiation factor IIB from Methanobrevibacter smithii (strain ATCC 35061 / DSM 861 / OCM 144 / PS).